Here is a 527-residue protein sequence, read N- to C-terminus: DNA polymerase epsilon subunit 2 (527 aa).

It belongs to the DNA polymerase epsilon subunit B family. Component of the DNA polymerase epsilon complex consisting of four subunits: the catalytic subunit POLE and the accessory subunits POLE2, POLE3 and POLE4.

It is found in the nucleus. Functionally, accessory component of the DNA polymerase epsilon complex. Participates in DNA repair and in chromosomal DNA replication. In Mus musculus (Mouse), this protein is DNA polymerase epsilon subunit 2 (Pole2).